The primary structure comprises 229 residues: Potassium/proton antiporter CemA (229 aa).

2 consecutive transmembrane segments (helical) span residues 7–27 and 107–127; these read FTPL…SFSV and ILHF…SILG.

Belongs to the CemA family.

The protein resides in the plastid. It is found in the chloroplast inner membrane. The catalysed reaction is K(+)(in) + H(+)(out) = K(+)(out) + H(+)(in). In terms of biological role, contributes to K(+)/H(+) antiport activity by supporting proton efflux to control proton extrusion and homeostasis in chloroplasts in a light-dependent manner to modulate photosynthesis. Prevents excessive induction of non-photochemical quenching (NPQ) under continuous-light conditions. Indirectly promotes efficient inorganic carbon uptake into chloroplasts. The polypeptide is Potassium/proton antiporter CemA (Solanum tuberosum (Potato)).